A 242-amino-acid chain; its full sequence is Tropomyosin-1 (242 aa).

Disordered stretches follow at residues 1 to 31 (MDAI…ELTA) and 65 to 96 (TSLT…QTDY). Positions 1–242 (MDAIKKKMSA…DELLLELASM (242 aa)) form a coiled coil. 2 stretches are compositionally biased toward basic and acidic residues: residues 13–23 (TKLEEADKQAQ) and 70–96 (KYNE…QTDY).

The protein belongs to the tropomyosin family. In terms of assembly, homodimer. Expressed ubiquitously.

The protein is Tropomyosin-1 (TPM1) of Podocoryna carnea (Hydrozoan).